The primary structure comprises 179 residues: Large ribosomal subunit protein uL5 (179 aa).

It belongs to the universal ribosomal protein uL5 family. In terms of assembly, part of the 50S ribosomal subunit; part of the 5S rRNA/L5/L18/L25 subcomplex. Contacts the 5S rRNA and the P site tRNA. Forms a bridge to the 30S subunit in the 70S ribosome.

Its function is as follows. This is one of the proteins that bind and probably mediate the attachment of the 5S RNA into the large ribosomal subunit, where it forms part of the central protuberance. In the 70S ribosome it contacts protein S13 of the 30S subunit (bridge B1b), connecting the 2 subunits; this bridge is implicated in subunit movement. Contacts the P site tRNA; the 5S rRNA and some of its associated proteins might help stabilize positioning of ribosome-bound tRNAs. In Clostridium novyi (strain NT), this protein is Large ribosomal subunit protein uL5.